Consider the following 224-residue polypeptide: Deoxyribose-phosphate aldolase (224 aa).

The active-site Proton donor/acceptor is the aspartate 92. Lysine 155 serves as the catalytic Schiff-base intermediate with acetaldehyde. The active-site Proton donor/acceptor is the lysine 184.

Belongs to the DeoC/FbaB aldolase family. DeoC type 1 subfamily.

It is found in the cytoplasm. The enzyme catalyses 2-deoxy-D-ribose 5-phosphate = D-glyceraldehyde 3-phosphate + acetaldehyde. It functions in the pathway carbohydrate degradation; 2-deoxy-D-ribose 1-phosphate degradation; D-glyceraldehyde 3-phosphate and acetaldehyde from 2-deoxy-alpha-D-ribose 1-phosphate: step 2/2. Functionally, catalyzes a reversible aldol reaction between acetaldehyde and D-glyceraldehyde 3-phosphate to generate 2-deoxy-D-ribose 5-phosphate. The protein is Deoxyribose-phosphate aldolase of Clostridium perfringens (strain 13 / Type A).